Reading from the N-terminus, the 340-residue chain is DNA-directed RNA polymerase subunit alpha (340 aa).

Residues 1–236 are alpha N-terminal domain (alpha-NTD); the sequence is MLSLSKNWNT…EQLQLFISFE (236 aa). Positions 251–340 are alpha C-terminal domain (alpha-CTD); sequence FAPYLLKRVD…LSKRYEDSYN (90 aa).

The protein belongs to the RNA polymerase alpha chain family. In terms of assembly, homodimer. The RNAP catalytic core consists of 2 alpha, 1 beta, 1 beta' and 1 omega subunit. When a sigma factor is associated with the core the holoenzyme is formed, which can initiate transcription.

The enzyme catalyses RNA(n) + a ribonucleoside 5'-triphosphate = RNA(n+1) + diphosphate. DNA-dependent RNA polymerase catalyzes the transcription of DNA into RNA using the four ribonucleoside triphosphates as substrates. This chain is DNA-directed RNA polymerase subunit alpha, found in Rickettsia peacockii (strain Rustic).